The sequence spans 513 residues: MKIAYWMYAGPAHIGTLRVASSFKNVHAIMHAPLGDDYFNVMRSMLERERDFTPVTASIVDRHVLARGSQEKVVENITRKDKEERPDLIVLTPTCTSSILQEDLQNFVDRAAMTSQSDVILADVNHYRVNELQAADRTLEQVVRYYLDKAHRQENLNQPITEVPSVNIIGMFTLGFHNQHDCRELKRLFQDLGIKVNEVIPEGGSVENLRNLPKAWLNIVPYREVGLMTALYLEKEFGMPYVATTPMGIVDTAKFIREIQHHINKWAPILLGKVVDYEEYIDQQTRFVSQAAWFSRSIDCQNLTGKKAVVFGDTTHAAAMTKILAREMGVYVVCAGTYCKHDAEWFKDQVQGFCDEVLITDDHTEVGDMIARVEPAAIFGSQMERHIGKRLDIPCGVISAPVHIQNFPLGYRPFLGYEGTNQIADLVYNSFTLGMEDHLLEIFGGHDTKEVITKSLSTDSDLTWDPESQAELSKIPGFVRGKIKRNTEKFARQNGMSKITVEIMYAAKEALNA.

A [4Fe-4S] cluster-binding site is contributed by Asp-36. The active-site Proton donor is Asp-299. 434–435 (GM) is a binding site for substrate.

The protein belongs to the ChlB/BchB/BchZ family. In terms of assembly, protochlorophyllide reductase is composed of three subunits; ChlL, ChlN and ChlB. Forms a heterotetramer of two ChlB and two ChlN subunits. [4Fe-4S] cluster is required as a cofactor.

It is found in the plastid. The protein localises to the chloroplast. The catalysed reaction is chlorophyllide a + oxidized 2[4Fe-4S]-[ferredoxin] + 2 ADP + 2 phosphate = protochlorophyllide a + reduced 2[4Fe-4S]-[ferredoxin] + 2 ATP + 2 H2O. Its pathway is porphyrin-containing compound metabolism; chlorophyll biosynthesis (light-independent). Component of the dark-operative protochlorophyllide reductase (DPOR) that uses Mg-ATP and reduced ferredoxin to reduce ring D of protochlorophyllide (Pchlide) to form chlorophyllide a (Chlide). This reaction is light-independent. The NB-protein (ChlN-ChlB) is the catalytic component of the complex. In Staurastrum punctulatum (Green alga), this protein is Light-independent protochlorophyllide reductase subunit B.